A 195-amino-acid chain; its full sequence is Obelin (195 aa).

Residues 1–6 constitute a propeptide that is removed on maturation; sequence MASKYA. EF-hand domains follow at residues 17-52, 53-88, 110-145, and 146-181; these read KWIKRHKFMFDYLDINGNGQITLDEIVSKASDDICK, NLGATPAQTQRHQDCVEAFFRGCGLEYGKETKFPEF, LIREWGDAVFDIFDKDGSGTITLDEWKAYGRISGIS, and PSEEDCEKTFQHCDLDNSGELDVDEMTRQHLGFWYT. The Ca(2+) site is built by Asp-30, Asn-32, Asn-34, Gln-36, and Glu-41. Residues Asp-123, Asp-125, Ser-127, Thr-129, Glu-134, Asp-159, Asp-161, Ser-163, Glu-165, and Glu-170 each contribute to the Ca(2+) site.

It belongs to the aequorin family.

Its function is as follows. Ca(2+)-dependent bioluminescence photoprotein. Displays an emission peak at 495 nm (blue light). Trace amounts of calcium ion trigger the intramolecular oxidation of the chromophore, coelenterazine into coelenteramide and CO(2) with the concomitant emission of light. The protein is Obelin of Obelia geniculata (Knotted thread hydroid).